The primary structure comprises 312 residues: DNA-directed RNA polymerase subunit alpha (312 aa).

Residues 1–226 (MIEFKKPNIT…EHFKAFESAD (226 aa)) form an alpha N-terminal domain (alpha-NTD) region. The tract at residues 243–312 (KEKKLEMTIE…DLGLSLRQED (70 aa)) is alpha C-terminal domain (alpha-CTD).

The protein belongs to the RNA polymerase alpha chain family. As to quaternary structure, homodimer. The RNAP catalytic core consists of 2 alpha, 1 beta, 1 beta' and 1 omega subunit. When a sigma factor is associated with the core the holoenzyme is formed, which can initiate transcription.

It carries out the reaction RNA(n) + a ribonucleoside 5'-triphosphate = RNA(n+1) + diphosphate. In terms of biological role, DNA-dependent RNA polymerase catalyzes the transcription of DNA into RNA using the four ribonucleoside triphosphates as substrates. This is DNA-directed RNA polymerase subunit alpha from Lactobacillus delbrueckii subsp. bulgaricus (strain ATCC BAA-365 / Lb-18).